Here is a 526-residue protein sequence, read N- to C-terminus: Amino acid transporter AVT1E (526 aa).

A disordered region spans residues 1–49 (MKQNETFDQEREDLYHTFDEEDEESQTESSVPSTPLSRNRSEDVPVPWP). The span at 8–18 (DQEREDLYHTF) shows a compositional bias: basic and acidic residues. The next 11 membrane-spanning stretches (helical) occupy residues 140–160 (SVLN…PYAV), 165–185 (WLGL…GILL), 212–232 (ILVS…YIIM), 253–273 (LDST…TVWL), 278–298 (LLSY…LCLF), 320–340 (IPVA…FPNI), 353–373 (VLLI…VCGF), 397–417 (IAVW…ITPV), 436–456 (GVSM…ALTV), 458–478 (FFAT…ALIF), and 494–514 (FQIG…CCGT).

It belongs to the amino acid/polyamine transporter 2 family. Amino acid/auxin permease (AAAP) (TC 2.A.18.5) subfamily.

It localises to the membrane. This is Amino acid transporter AVT1E from Arabidopsis thaliana (Mouse-ear cress).